Here is a 96-residue protein sequence, read N- to C-terminus: Large ribosomal subunit protein bL28 (96 aa).

Positions 1 to 22 (MSRSCELTGKGVQSGNNVSHAN) are enriched in polar residues. The tract at residues 1-24 (MSRSCELTGKGVQSGNNVSHANNK) is disordered.

It belongs to the bacterial ribosomal protein bL28 family.

In Rhizobium meliloti (strain 1021) (Ensifer meliloti), this protein is Large ribosomal subunit protein bL28.